The chain runs to 1134 residues: Envelopment polyprotein (1134 aa).

The first 16 residues, 1-16 (MWSLLLLAALVGQGFA), serve as a signal peptide directing secretion. Topologically, residues 17 to 484 (LKNVFDMRIQ…PGFHGWATAA (468 aa)) are lumenal. Cystine bridges form between Cys27–Cys149, Cys61–Cys155, Cys107–Cys126, Cys131–Cys136, Cys173–Cys183, Cys208–Cys245, Cys232–Cys349, Cys374–Cys433, Cys378–Cys387, and Cys403–Cys422. The N-linked (GlcNAc...) asparagine; by host glycan is linked to Asn132. 2 N-linked (GlcNAc...) asparagine; by host glycosylation sites follow: Asn233 and Asn345. Asn397 carries N-linked (GlcNAc...) asparagine; by host glycosylation. Residues 485–504 (LLITFCFGWVLIPACTLAIL) traverse the membrane as a helical segment. Residues 505 to 626 (LVLKFFANIL…NLFRYKSRCY (122 aa)) lie on the Cytoplasmic side of the membrane. The tract at residues 514–531 (LHTSNQENRFKAILRKIK) is binding to the ribonucleoprotein. 2 consecutive CCHC-type zinc fingers follow at residues 543–563 (CEICKYECETLKELKAHNLSC) and 568–589 (CPYCFTHCEPTETATQAHYKVC). Binding to the ribonucleoprotein stretches follow at residues 586 to 603 (YKVCQATHRFREDLKKTV), 590 to 601 (QATHRFREDLKK), and 609 to 623 (WARLYRTLNLFRYKS). Residues 609 to 632 (WARLYRTLNLFRYKSRCYILTMWT) enclose the ITAM domain. The short motif at 613 to 616 (YRTL) is the YxxL element. A helical transmembrane segment spans residues 627-647 (ILTMWTLLLIIESILWAASAA). Residues 648 to 1105 (EIPLVPLWTD…WVMGIINGNW (458 aa)) are Lumenal-facing. Intrachain disulfides connect Cys734/Cys769, Cys738/Cys776, Cys750/Cys884, Cys764/Cys895, Cys779/Cys903, Cys805/Cys814, Cys822/Cys831, and Cys862/Cys866. The fusion loop stretch occupies residues 756–776 (YEYENSWACNPPDCPGVGTGC). N-linked (GlcNAc...) asparagine; by host glycosylation is present at Asn927. Disulfide bonds link Cys969/Cys999, Cys992/Cys1044, Cys1009/Cys1014, Cys1045/Cys1050, and Cys1084/Cys1088. A helical transmembrane segment spans residues 1106–1125 (VVLIVLCVLLLFSLILLSIL). Residues 1121–1134 (LLSILCPVRKHKKS) are binding to the ribonucleoprotein. Residues 1126–1134 (CPVRKHKKS) are Cytoplasmic-facing.

It belongs to the hantavirus envelope glycoprotein family. As to quaternary structure, homodimer. Homotetramer; forms heterotetrameric Gn-Gc spikes in the pre-fusion conformation. Interacts (via C-terminus) with the nucleoprotein. Interacts with host TUFM; this interaction contributes to the virus-induced degradation of mitochondria by autophagy, which leads to degradation of host MAVS and inhibition of type I interferon (IFN) responses. Interacts with host MAP1LC3B; this interaction contributes to the virus-induced degradation of mitochondria by autophagy, which leads to degradation of host MAVS and inhibition of type I interferon (IFN) responses. Homodimer. Homotetramer; forms heterotetrameric Gn-Gc spikes in the pre-fusion conformation. Homotrimer; forms homotrimer in the post-fusion conformation at acidic pH. Interacts (via C-terminus) with the nucleoprotein. In terms of processing, envelope polyprotein precursor is quickly cleaved in vivo just after synthesis, presumably by host signal peptidase.

The protein localises to the virion membrane. Its subcellular location is the host cell surface. It is found in the host Golgi apparatus membrane. It localises to the host endoplasmic reticulum membrane. The protein resides in the host mitochondrion. Forms homotetramers with glycoprotein C at the surface of the virion. Attaches the virion to host cell receptors including integrin ITGAV/ITGB3. This attachment induces virion internalization predominantly through clathrin-dependent endocytosis. Mediates the assembly and budding of infectious virus particles through its interaction with the nucleocapsid protein and the viral genome. May dysregulate normal immune and endothelial cell responses through an ITAM motif. Translocates to mitochondria, binds to host TUFM and recruits MAP1LC3B. These interactions induce mitochondrial autophagy and therefore destruction of host MAVS leading to inhibition of type I interferon (IFN) responses. Concomitant breakdown of glycoprotein N is apparently prevented by the nucleoprotein that may inhibit Gn-stimulated autophagosome-lysosome fusion. Interacts with the viral genomic RNA. In terms of biological role, forms homotetramers with glycoprotein N at the surface of the virion. Attaches the virion to host cell receptors including integrin ITGAV/ITGB3. This attachment induces virion internalization predominantly through clathrin-dependent endocytosis. Class II fusion protein that promotes fusion of viral membrane with host endosomal membrane after endocytosis of the virion. The sequence is that of Envelopment polyprotein (GP) from Homo sapiens (Human).